We begin with the raw amino-acid sequence, 712 residues long: MAQSSPQLDIQVLHDLRQRFPEIPEGVVSQCMLQNNNNLEACCRALSQESSKYLYMEYHSPDDNRMNRNRLLHINLGIHSPSSYHPGDGAQLNGGRTLVHSSSDGHIDPQHAAGKQLICLVQEPHSAPAVVAATPNYNPFFMNEQNRSAATPPSQPPQQPSSMQTGMNPSAMQGPSPPPPPPSYMHIPRYSTNPITVTVSQNLPSGQTVPRALQILPQIPSNLYGSPGSIYIRQTSQSSSGRQTPQSTPWQSSPQGPVPHYSQRPLPVYPHQQNYQPSQYSPKQQQIPQSAYHSPPPSQCPSPFSSPQHQVQPSQLGHIFMPPSPSTTPPHPYQQGPPSYQKQGSHSVAYLPYTASSLSKGSMKKIEITVEPSQRPGTAINRSPSPISNQPSPRNQHSLYTATTPPSSSPSRGISSQPKPPFSVNPVYITYTQPTGPSCTPSPSPRVIPNPTTVFKITVGRATTENLLNLVDQEERSAAPEPIQPISVIPGSGGEKGSHKYQRSSSSGSDDYAYTQALLLHQRARMERLAKQLKLEKEELERLKSEVNGMEHDLMQRRLRRVSCTTAIPTPEEMTRLRSMNRQLQINVDCTLKEVDLLQSRGNFDPKAMNNFYDNIEPGPVVPPKPSKKDSSDPCTIERKARRISVTSKVQADIHDTQAAAADEHRTGSTQSPRTQPRDEDYEGAPWNCDSCTFLNHPALNRCEQCEMPRYT.

Alanine 2 carries the N-acetylalanine modification. Residues 8-51 enclose the CUE domain; sequence LDIQVLHDLRQRFPEIPEGVVSQCMLQNNNNLEACCRALSQESS. Phosphoserine occurs at positions 60, 101, and 103. 4 disordered regions span residues 141-189, 227-345, 369-447, and 475-509; these read FMNE…HIPR, PGSI…KQGS, TVEP…SPRV, and ERSA…SSGS. Residues 163 to 173 are compositionally biased toward polar residues; sequence MQTGMNPSAMQ. Composition is skewed to low complexity over residues 233-249 and 269-290; these read RQTS…QSTP and YPHQ…IPQS. Positions 322 to 332 are enriched in pro residues; the sequence is PPSPSTTPPHP. Polar residues-rich tracts occupy residues 336–345 and 371–404; these read GPPSYQKQGS and EPSQ…TATT. A Phosphoserine modification is found at serine 385. Threonine 404 carries the phosphothreonine modification. The span at 405–417 shows a compositional bias: low complexity; that stretch reads PPSSSPSRGISSQ. Phosphoserine occurs at positions 409 and 492. Serine 506 carries the post-translational modification Phosphoserine; by MAPKAPK2 and MAPKAPK3. The stretch at 517 to 559 forms a coiled coil; that stretch reads ALLLHQRARMERLAKQLKLEKEELERLKSEVNGMEHDLMQRRL. A disordered region spans residues 609–636; it reads MNNFYDNIEPGPVVPPKPSKKDSSDPCT. Over residues 627–636 the composition is skewed to basic and acidic residues; that stretch reads SKKDSSDPCT. Residue lysine 649 forms a Glycyl lysine isopeptide (Lys-Gly) (interchain with G-Cter in ubiquitin) linkage. Residues 658-667 show a composition bias toward basic and acidic residues; that stretch reads QAAAADEHRT. The tract at residues 658 to 682 is disordered; that stretch reads QAAAADEHRTGSTQSPRTQPRDEDY. Residues 682–712 form a RanBP2-type zinc finger; that stretch reads YEGAPWNCDSCTFLNHPALNRCEQCEMPRYT. Residue cysteine 692 is modified to (Microbial infection) S-methylcysteine.

In terms of assembly, interacts with TAB1, TAB2, MAP3K7, TRAF2 and TRAF6. The minimal TAB3-containing complex (TAB1-MAP3K7-TAB3) appears not to contain TAB2. However, it seems sensible to consider that TAB2 may also join this complex and may act in a cooperative manner with TAB3. Interacts with DYNC2I2 (via the WD domains). Interacts with RBCK1. Binds 'Lys-63'-linked polyubiquitin chains. Interacts with TRIM5. Interacts with TRIM38 (via B30.2/SPRY domain), leading to its translocation to lysosomes and degradation. Interacts with ASB1. As to quaternary structure, (Microbial infection) Interacts with M.tuberculosis PtpA, which blocks the NF-kappa-B signaling pathway. Post-translationally, ubiquitinated; following IL1 stimulation or TRAF6 overexpression. Ubiquitinated by AMFR via 'Lys-27'-linked polyubiquitination; leading to TAK1/MAP3K7 activation. Degraded in a lysosome-dependent manner following interaction with TRIM38. In terms of processing, phosphorylated at Ser-506 by MAPKAPK2 and MAPKAPK3 following IL1 treatment. Post-translationally, (Microbial infection) Methylated at Cys-692 by enteropathogenic E.coli protein NleE or S.flexneri protein OspZ: methylation disrupts zinc-binding and ability to bind 'Lys-63'-linked ubiquitin, leading to NF-kappa-B inactivation. Widely expressed. Constitutively overexpressed in certain tumor tissues. In terms of tissue distribution, major transcript. As to expression, minor transcript.

Adapter required to activate the JNK and NF-kappa-B signaling pathways through the specific recognition of 'Lys-63'-linked polyubiquitin chains by its RanBP2-type zinc finger (NZF). Acts as an adapter linking MAP3K7/TAK1 and TRAF6 to 'Lys-63'-linked polyubiquitin chains. The RanBP2-type zinc finger (NZF) specifically recognizes Lys-63'-linked polyubiquitin chains unanchored or anchored to the substrate proteins such as RIPK1/RIP1 and RIPK2: this acts as a scaffold to organize a large signaling complex to promote autophosphorylation of MAP3K7/TAK1, and subsequent activation of I-kappa-B-kinase (IKK) core complex by MAP3K7/TAK1. Its function is as follows. May be an oncogenic factor. The chain is TGF-beta-activated kinase 1 and MAP3K7-binding protein 3 from Homo sapiens (Human).